We begin with the raw amino-acid sequence, 191 residues long: Protein GrpE (191 aa).

Residues 1–11 are compositionally biased toward basic and acidic residues; sequence MTDSSNAHEAE. 2 disordered regions span residues 1–22 and 172–191; these read MTDSSNAHEAENPTVPTPDNEI and KVSKAPAPQGTEAEIENNNE.

It belongs to the GrpE family. As to quaternary structure, homodimer.

It localises to the cytoplasm. Functionally, participates actively in the response to hyperosmotic and heat shock by preventing the aggregation of stress-denatured proteins, in association with DnaK and GrpE. It is the nucleotide exchange factor for DnaK and may function as a thermosensor. Unfolded proteins bind initially to DnaJ; upon interaction with the DnaJ-bound protein, DnaK hydrolyzes its bound ATP, resulting in the formation of a stable complex. GrpE releases ADP from DnaK; ATP binding to DnaK triggers the release of the substrate protein, thus completing the reaction cycle. Several rounds of ATP-dependent interactions between DnaJ, DnaK and GrpE are required for fully efficient folding. The protein is Protein GrpE of Chlamydia abortus (strain DSM 27085 / S26/3) (Chlamydophila abortus).